A 251-amino-acid chain; its full sequence is Aliphatic sulfonates import ATP-binding protein SsuB (251 aa).

An ABC transporter domain is found at 19–238 (GELRHVDKWY…PGEPGAHTER (220 aa)). ATP is bound at residue 51 to 58 (GRSGSGKS).

Belongs to the ABC transporter superfamily. Aliphatic sulfonates importer (TC 3.A.1.17.2) family. The complex is composed of two ATP-binding proteins (SsuB), two transmembrane proteins (SsuC) and a solute-binding protein (SsuA).

The protein resides in the cell membrane. The catalysed reaction is ATP + H2O + aliphatic sulfonate-[sulfonate-binding protein]Side 1 = ADP + phosphate + aliphatic sulfonateSide 2 + [sulfonate-binding protein]Side 1.. Functionally, part of the ABC transporter complex SsuABC involved in aliphatic sulfonates import. Responsible for energy coupling to the transport system. The chain is Aliphatic sulfonates import ATP-binding protein SsuB from Mycobacterium avium (strain 104).